A 213-amino-acid chain; its full sequence is MYQDKILVRQLGLQPYEAISQAMHNFTDMRDENSHDEIWLVEHYPVFTQGQAGKAEHILMPGDIPVVQSDRGGQVTYHGPGQQVMYVLLNLKRRKLGVRDLVTLLEQTVVNTLAEMGIEAHPRADAPGVYVGEKKICSLGLRIRRGCSFHGLALNVNMDLSPFLRINPCGYAGMEMAKITQWKEDATTDNIAPRLLANILALLNNPPYEYIAT.

A BPL/LPL catalytic domain is found at 32–207 (ENSHDEIWLV…NILALLNNPP (176 aa)). Substrate is bound by residues 71–78 (RGGQVTYH), 138–140 (SLG), and 151–153 (GLA). The active-site Acyl-thioester intermediate is cysteine 169.

It belongs to the LipB family.

Its subcellular location is the cytoplasm. It catalyses the reaction octanoyl-[ACP] + L-lysyl-[protein] = N(6)-octanoyl-L-lysyl-[protein] + holo-[ACP] + H(+). It functions in the pathway protein modification; protein lipoylation via endogenous pathway; protein N(6)-(lipoyl)lysine from octanoyl-[acyl-carrier-protein]: step 1/2. Its function is as follows. Catalyzes the transfer of endogenously produced octanoic acid from octanoyl-acyl-carrier-protein onto the lipoyl domains of lipoate-dependent enzymes. Lipoyl-ACP can also act as a substrate although octanoyl-ACP is likely to be the physiological substrate. The polypeptide is Octanoyltransferase (Salmonella typhi).